We begin with the raw amino-acid sequence, 446 residues long: Transcription factor Sox-10 (446 aa).

3 disordered regions span residues M1–E60, R153–G191, and H203–G264. Positions D36–E48 are enriched in acidic residues. A Glycyl lysine isopeptide (Lys-Gly) (interchain with G-Cter in SUMO) cross-link involves residue K52. The dimerization (DIM) stretch occupies residues D56–P96. A DNA-binding region (HMG box) is located at residues V98–K166. A compositionally biased stretch (basic and acidic residues) spans R153–Y167. Positions S213–G226 are enriched in polar residues. The interval S217–I303 is transactivation domain (TAM). Residues S243 to G257 are compositionally biased toward basic and acidic residues. The interval K337–P446 is transactivation domain (TAC). A Glycyl lysine isopeptide (Lys-Gly) (interchain with G-Cter in SUMO) cross-link involves residue K341. Residues S421–P446 form a disordered region. Polar residues predominate over residues V426 to P446.

In terms of assembly, interacts with the sumoylation factors ube2i/ubc9 and sumo1. Post-translationally, sumoylated. First expressed at stages 13/14 at the lateral edges of the neural plate, in the neural crest forming region. By stage 22, neural crest cells migrate in the cranial region and strong expression is seen in the crest cells that populate the branchial arches as well as those migrating in the frontonasal region. Also strongly expressed in the trunk neural crest. Expression in the otic vesicle begins around stage 25 and persists until at least stage 40. At stage 30, expression is down-regulated in the cranial neural crest of the pharyngeal arches but persists in the trunk neural crest, in the otic vesicle and in discrete domains adjacent to the hindbrain. At stage 40, expression is restricted to the otic vesicle, differentiated pigment cells, and in several cranial ganglia.

It localises to the cytoplasm. Its subcellular location is the nucleus. Its function is as follows. Acts early in neural crest formation, functioning redundantly with the other group E Sox factors sox8 and sox9 to induce neural crest progenitors. Acts downstream of wnt-signaling at the neural plate border. Involved in the specification of neural crest progenitors fated to form the pigment cell lineage. The protein is Transcription factor Sox-10 (sox10) of Xenopus laevis (African clawed frog).